The following is a 606-amino-acid chain: Polyphenol oxidase A1, chloroplastic (606 aa).

Residues 1-92 (MTSISALSFI…TLATNPSALA (92 aa)) constitute a chloroplast transit peptide. The tract at residues 32–63 (KQHQSSKLRKPKRQVTCSSNNNQNNPKEEQEL) is disordered. The segment covering 35–44 (QSSKLRKPKR) has biased composition (basic residues). 2 cysteine pairs are disulfide-bonded: cysteine 103-cysteine 121 and cysteine 120-cysteine 182. The Cu cation site is built by histidine 181, histidine 202, histidine 211, histidine 333, histidine 337, and histidine 367. A cross-link (2'-(S-cysteinyl)-histidine (Cys-His)) is located at residues 185-202 (CDGAYSQIGFPDLKLQVH).

This sequence belongs to the tyrosinase family. Requires Cu(2+) as cofactor.

The protein localises to the plastid. It is found in the chloroplast thylakoid lumen. The enzyme catalyses 2 catechol + O2 = 2 1,2-benzoquinone + 2 H2O. Functionally, catalyzes the oxidation of mono- and o-diphenols to o-diquinones. The chain is Polyphenol oxidase A1, chloroplastic from Vicia faba (Broad bean).